A 66-amino-acid polypeptide reads, in one-letter code: Large ribosomal subunit protein bL35 (66 aa).

This sequence belongs to the bacterial ribosomal protein bL35 family.

The chain is Large ribosomal subunit protein bL35 from Caulobacter sp. (strain K31).